The following is a 665-amino-acid chain: Coiled-coil domain-containing protein 138 (665 aa).

Threonine 48 is subject to Phosphothreonine. Phosphoserine is present on serine 49. A coiled-coil region spans residues 198–323 (QQKFAEELQK…YEFMTIQRLK (126 aa)). The residue at position 469 (serine 469) is a Phosphoserine.

This Macaca fascicularis (Crab-eating macaque) protein is Coiled-coil domain-containing protein 138 (CCDC138).